A 266-amino-acid chain; its full sequence is Dickkopf-related protein 1 (266 aa).

The N-terminal stretch at 1–31 (MMALGAAGATRVFVAMVAAALGGHPLLGVSA) is a signal peptide. Ser61 carries an O-linked (GalNAc...) serine glycan. Cystine bridges form between Cys85-Cys97, Cys91-Cys111, Cys114-Cys128, Cys121-Cys133, Cys127-Cys138, Cys189-Cys201, Cys195-Cys210, Cys200-Cys237, Cys220-Cys245, and Cys239-Cys263. A DKK-type Cys-1 region spans residues 85-138 (CAEDEECGTDEYCASPTRGGDAGVQICLACRKRRKRCMRHAMCCPGNYCKNGIC). Positions 189–263 (CLRSSDCASG…ASNSSRLHTC (75 aa)) are DKK-type Cys-2. N-linked (GlcNAc...) asparagine glycosylation occurs at Asn256.

This sequence belongs to the dickkopf family. As to quaternary structure, interacts with LRP6. Interacts (via the C-terminal Cys-rich domain) with LRP5 (via beta-propeller regions 3 and 4); the interaction, enhanced by MESD and or KREMEN, antagonizes Wnt-mediated signaling. Forms a ternary complex with LRP6 and KREM1. Interacts with KREM1. In terms of tissue distribution, placenta.

Its subcellular location is the secreted. Its function is as follows. Antagonizes canonical Wnt signaling by inhibiting LRP5/6 interaction with Wnt and by forming a ternary complex with the transmembrane protein KREMEN that promotes internalization of LRP5/6. DKKs play an important role in vertebrate development, where they locally inhibit Wnt regulated processes such as antero-posterior axial patterning, limb development, somitogenesis and eye formation. In the adult, Dkks are implicated in bone formation and bone disease, cancer and Alzheimer disease. Inhibits the pro-apoptotic function of KREMEN1 in a Wnt-independent manner, and has anti-apoptotic activity. The protein is Dickkopf-related protein 1 (DKK1) of Homo sapiens (Human).